Here is a 612-residue protein sequence, read N- to C-terminus: Dihydroxy-acid dehydratase (612 aa).

Residue aspartate 81 coordinates Mg(2+). Cysteine 122 provides a ligand contact to [2Fe-2S] cluster. Residues aspartate 123 and lysine 124 each contribute to the Mg(2+) site. Lysine 124 is modified (N6-carboxylysine). Cysteine 195 provides a ligand contact to [2Fe-2S] cluster. Glutamate 491 is a Mg(2+) binding site. Serine 517 serves as the catalytic Proton acceptor.

It belongs to the IlvD/Edd family. As to quaternary structure, homodimer. The cofactor is [2Fe-2S] cluster. Mg(2+) serves as cofactor.

The enzyme catalyses (2R)-2,3-dihydroxy-3-methylbutanoate = 3-methyl-2-oxobutanoate + H2O. It catalyses the reaction (2R,3R)-2,3-dihydroxy-3-methylpentanoate = (S)-3-methyl-2-oxopentanoate + H2O. It participates in amino-acid biosynthesis; L-isoleucine biosynthesis; L-isoleucine from 2-oxobutanoate: step 3/4. It functions in the pathway amino-acid biosynthesis; L-valine biosynthesis; L-valine from pyruvate: step 3/4. Functions in the biosynthesis of branched-chain amino acids. Catalyzes the dehydration of (2R,3R)-2,3-dihydroxy-3-methylpentanoate (2,3-dihydroxy-3-methylvalerate) into 2-oxo-3-methylpentanoate (2-oxo-3-methylvalerate) and of (2R)-2,3-dihydroxy-3-methylbutanoate (2,3-dihydroxyisovalerate) into 2-oxo-3-methylbutanoate (2-oxoisovalerate), the penultimate precursor to L-isoleucine and L-valine, respectively. This chain is Dihydroxy-acid dehydratase, found in Bartonella tribocorum (strain CIP 105476 / IBS 506).